Consider the following 359-residue polypeptide: 3-dehydroquinate synthase (359 aa).

NAD(+) contacts are provided by residues 72 to 77, 106 to 110, 130 to 131, K143, and K152; these read DGEHYK, GVIGD, and TT. E185, H248, and H265 together coordinate Zn(2+).

Belongs to the sugar phosphate cyclases superfamily. Dehydroquinate synthase family. Requires Co(2+) as cofactor. The cofactor is Zn(2+). It depends on NAD(+) as a cofactor.

It localises to the cytoplasm. It carries out the reaction 7-phospho-2-dehydro-3-deoxy-D-arabino-heptonate = 3-dehydroquinate + phosphate. It participates in metabolic intermediate biosynthesis; chorismate biosynthesis; chorismate from D-erythrose 4-phosphate and phosphoenolpyruvate: step 2/7. Functionally, catalyzes the conversion of 3-deoxy-D-arabino-heptulosonate 7-phosphate (DAHP) to dehydroquinate (DHQ). The protein is 3-dehydroquinate synthase of Thermodesulfovibrio yellowstonii (strain ATCC 51303 / DSM 11347 / YP87).